Reading from the N-terminus, the 420-residue chain is Phosphoribosylamine--glycine ligase (420 aa).

Residues lysine 108–histidine 314 enclose the ATP-grasp domain. Leucine 134 to serine 195 lines the ATP pocket. Mg(2+) contacts are provided by glutamate 284 and asparagine 286.

This sequence belongs to the GARS family. The cofactor is Mg(2+). Mn(2+) is required as a cofactor.

The enzyme catalyses 5-phospho-beta-D-ribosylamine + glycine + ATP = N(1)-(5-phospho-beta-D-ribosyl)glycinamide + ADP + phosphate + H(+). The protein operates within purine metabolism; IMP biosynthesis via de novo pathway; N(1)-(5-phospho-D-ribosyl)glycinamide from 5-phospho-alpha-D-ribose 1-diphosphate: step 2/2. In Listeria monocytogenes serotype 4b (strain F2365), this protein is Phosphoribosylamine--glycine ligase.